Reading from the N-terminus, the 521-residue chain is Cytochrome P450 1A1 (521 aa).

Residue F229 participates in substrate binding. C463 contacts heme.

The protein belongs to the cytochrome P450 family. Requires heme as cofactor.

It localises to the endoplasmic reticulum membrane. Its subcellular location is the microsome membrane. It carries out the reaction an organic molecule + reduced [NADPH--hemoprotein reductase] + O2 = an alcohol + oxidized [NADPH--hemoprotein reductase] + H2O + H(+). Functionally, cytochromes P450 are a group of heme-thiolate monooxygenases. They oxidize a variety of structurally unrelated compounds, including steroids, fatty acids, and xenobiotics. The polypeptide is Cytochrome P450 1A1 (cyp1a1) (Opsanus tau (Oyster toadfish)).